The chain runs to 239 residues: HTIFQRVYVDGVGEGHLSGIRIPESNWPIMDLSSNAIICNGGVNPYHEPVSLAIIQVPAGSTITAEWHPTIDDVNTTESIRPDHKGPVIAYLAKVPDALQTDVAGLSWFKFYEDGLSDDGTWATDRLIANAGKVNFTIPSCIQPGAYLLRHEIIAVHKAETYPGAQFYLRTLLTIFVFEVETAATPQMECAQLNITGPGSVVPSPTATFPGAYGSTDPGITVDIERLINYTVPGMPAEG.

His-1 contributes to the Cu(2+) binding site. A disulfide bridge connects residues Cys-39 and Cys-190. A glycan (N-linked (GlcNAc...) asparagine) is linked at Asn-75. His-84 contacts Cu(2+). An N-linked (GlcNAc...) asparagine glycan is attached at Asn-135. 2 residues coordinate O2: His-157 and Gln-166. Tyr-168 is a binding site for Cu(2+). Residues Asn-194 and Asn-229 are each glycosylated (N-linked (GlcNAc...) asparagine).

It belongs to the polysaccharide monooxygenase AA9 family. Requires Cu(2+) as cofactor.

The protein localises to the secreted. It catalyses the reaction [(1-&gt;4)-beta-D-glucosyl]n+m + reduced acceptor + O2 = 4-dehydro-beta-D-glucosyl-[(1-&gt;4)-beta-D-glucosyl]n-1 + [(1-&gt;4)-beta-D-glucosyl]m + acceptor + H2O.. Functionally, lytic polysaccharide monooxygenase (LPMO) that depolymerizes crystalline and amorphous polysaccharides via the oxidation of scissile alpha- or beta-(1-4)-glycosidic bonds, yielding C1 or C4 oxidation products. Catalysis by LPMOs requires the reduction of the active-site copper from Cu(II) to Cu(I) by a reducing agent and H(2)O(2) or O(2) as a cosubstrate. This Gloeophyllum trabeum (Brown rot fungus) protein is AA9 family lytic polysaccharide monooxygenase C.